An 867-amino-acid polypeptide reads, in one-letter code: Mitochondrial escape protein 2 (867 aa).

2 disordered regions span residues 1 to 20 (MISAHILSRQATRPGHRGPR) and 44 to 66 (RTTRAWESTSSSTASTGSHKESG). A mitochondrion-targeting transit peptide spans 1–41 (MISAHILSRQATRPGHRGPRFTTHSTALLVQRSLGQGLPLA). Residues 42 to 308 (HRRTTRAWES…IWAWFTSHPR (267 aa)) are Mitochondrial matrix-facing. Positions 48 to 59 (AWESTSSSTAST) are enriched in low complexity. In terms of domain architecture, RRM spans 203–293 (SRIRVEFVAA…TKLRLSYEQR (91 aa)). Residues 309 to 329 (IVIPLVAALIAAFTVAVFDPI) form a helical membrane-spanning segment. Residues 330–867 (REFFVKAHVQ…GVVKGQMVKG (538 aa)) lie on the Mitochondrial intermembrane side of the membrane. Over residues 614 to 639 (FAHDGQQKDSESGDQDNDNKNQKKDS) the composition is skewed to basic and acidic residues. A disordered region spans residues 614 to 647 (FAHDGQQKDSESGDQDNDNKNQKKDSNTPAPLDP). Positions 797-857 (LLVLTELAKM…ARLKGLEKEM (61 aa)) form a coiled coil.

The protein belongs to the YME2 family.

The protein resides in the mitochondrion inner membrane. In terms of biological role, plays a role in maintaining the mitochondrial genome and in controlling the mtDNA escape. Involved in the regulation of mtDNA nucleotide structure and number. May have a dispensable role in early maturation of pre-rRNA. This chain is Mitochondrial escape protein 2 (msp-45), found in Neurospora crassa (strain ATCC 24698 / 74-OR23-1A / CBS 708.71 / DSM 1257 / FGSC 987).